A 214-amino-acid polypeptide reads, in one-letter code: Glycerol-3-phosphate acyltransferase (214 aa).

Transmembrane regions (helical) follow at residues 4 to 24, 52 to 72, 82 to 102, 118 to 138, and 159 to 179; these read LIVA…IVSA, AAIL…WFVV, DTSV…PAFF, LAIN…VAFF, and FLFG…LLVW.

This sequence belongs to the PlsY family. As to quaternary structure, probably interacts with PlsX.

It localises to the cell inner membrane. The enzyme catalyses an acyl phosphate + sn-glycerol 3-phosphate = a 1-acyl-sn-glycero-3-phosphate + phosphate. It functions in the pathway lipid metabolism; phospholipid metabolism. Functionally, catalyzes the transfer of an acyl group from acyl-phosphate (acyl-PO(4)) to glycerol-3-phosphate (G3P) to form lysophosphatidic acid (LPA). This enzyme utilizes acyl-phosphate as fatty acyl donor, but not acyl-CoA or acyl-ACP. This chain is Glycerol-3-phosphate acyltransferase, found in Paraburkholderia xenovorans (strain LB400).